The following is a 648-amino-acid chain: Replication restart protein PriA (648 aa).

Residues 131 to 297 (TIFNESNKPT…KTHKYQLVTL (167 aa)) enclose the Helicase ATP-binding domain. Position 144-151 (144-151 (GVTGSGKT)) interacts with ATP. The DEAH box motif lies at 240-243 (DEEH). 8 residues coordinate Zn(2+): Cys358, Cys361, Cys367, Cys370, Cys385, Cys388, Cys398, and Cys401. The Helicase C-terminal domain maps to 393–548 (KIFSSCPECL…SFFTNELEIR (156 aa)).

The protein belongs to the helicase family. PriA subfamily. As to quaternary structure, component of the replication restart primosome. The cofactor is Zn(2+).

The catalysed reaction is Couples ATP hydrolysis with the unwinding of duplex DNA by translocating in the 3'-5' direction.. It carries out the reaction ATP + H2O = ADP + phosphate + H(+). Functionally, initiates the restart of stalled replication forks, which reloads the replicative helicase on sites other than the origin of replication. Recognizes and binds to abandoned replication forks and remodels them to uncover a helicase loading site. Promotes assembly of the primosome at these replication forks. The sequence is that of Replication restart protein PriA from Rickettsia typhi (strain ATCC VR-144 / Wilmington).